A 61-amino-acid polypeptide reads, in one-letter code: Alpha-conotoxin-like Lp1.6a (61 aa).

An N-terminal signal peptide occupies residues 1 to 21 (MGMRMMFIIFLFVVLATTVVS). Residues 22-44 (FTSGRASDGRNAPANNKVSDLIR) constitute a propeptide that is removed on maturation. Glutamine 45 bears the Pyrrolidone carboxylic acid mark. 2 disulfides stabilise this stretch: cysteine 47/cysteine 53 and cysteine 48/cysteine 60. Residue cysteine 60 is modified to Cysteine amide.

It belongs to the conotoxin A superfamily. As to expression, expressed by the venom duct.

It localises to the secreted. In terms of biological role, alpha-conotoxins act on postsynaptic membranes, they bind to the nicotinic acetylcholine receptors (nAChR) and thus inhibit them. This Conus leopardus (Leopard cone) protein is Alpha-conotoxin-like Lp1.6a.